A 388-amino-acid polypeptide reads, in one-letter code: MNLHEYQGKQLFAEYGLPVSKGIAAETPAEAAAAADIIGGDKWVVKAQVHAGGRGKAGGVKLVSSKAEIEEFAKKWLGNNLITYQTDENGQPVSRILVESCTDIADELYLGAVVDRSTRRVIFMASTEGGVEIEKVAEETPEKILKAIIDPLTGAQPYQARELGFKLGLNPVQIKQFTQIFLGLAKMFVDKDLALLEINPLVITDEGNLHCLDAKVAIDGNAMYRQPALKEMHDPSQEDEREAHAAKWELNYVALDGNIGCMVNGAGLAMGTMDIVKLHGGQPANFLDVGGGATKERVVEAFKIILSDDNVKAVLINIFGGIVRCDLIAEGVIGAVEEVGVKVPVVVRLEGNNAELGAKVLADSGLNIIAAESLTDAAVQVVKAAEGK.

One can recognise an ATP-grasp domain in the interval 9 to 244 (KQLFAEYGLP…PSQEDEREAH (236 aa)). Residues Lys-46, 53 to 55 (GRG), Glu-99, Thr-102, and Glu-107 each bind ATP. Positions 199 and 213 each coordinate Mg(2+). Residues Asn-264 and 321–323 (GIV) each bind substrate.

It belongs to the succinate/malate CoA ligase beta subunit family. As to quaternary structure, heterotetramer of two alpha and two beta subunits. Mg(2+) serves as cofactor.

The catalysed reaction is succinate + ATP + CoA = succinyl-CoA + ADP + phosphate. It carries out the reaction GTP + succinate + CoA = succinyl-CoA + GDP + phosphate. Its pathway is carbohydrate metabolism; tricarboxylic acid cycle; succinate from succinyl-CoA (ligase route): step 1/1. In terms of biological role, succinyl-CoA synthetase functions in the citric acid cycle (TCA), coupling the hydrolysis of succinyl-CoA to the synthesis of either ATP or GTP and thus represents the only step of substrate-level phosphorylation in the TCA. The beta subunit provides nucleotide specificity of the enzyme and binds the substrate succinate, while the binding sites for coenzyme A and phosphate are found in the alpha subunit. The polypeptide is Succinate--CoA ligase [ADP-forming] subunit beta (Saccharophagus degradans (strain 2-40 / ATCC 43961 / DSM 17024)).